Here is a 157-residue protein sequence, read N- to C-terminus: Small ribosomal subunit protein uS7 (157 aa).

Belongs to the universal ribosomal protein uS7 family. As to quaternary structure, part of the 30S ribosomal subunit. Contacts proteins S9 and S11.

One of the primary rRNA binding proteins, it binds directly to 16S rRNA where it nucleates assembly of the head domain of the 30S subunit. Is located at the subunit interface close to the decoding center, probably blocks exit of the E-site tRNA. The polypeptide is Small ribosomal subunit protein uS7 (Caldicellulosiruptor bescii (strain ATCC BAA-1888 / DSM 6725 / KCTC 15123 / Z-1320) (Anaerocellum thermophilum)).